The following is a 49-amino-acid chain: Fungus-induced-related protein 16 (49 aa).

The polypeptide is Fungus-induced-related protein 16 (fipr-16) (Caenorhabditis elegans).